Consider the following 363-residue polypeptide: Neutral protease 2 homolog MEP7 (363 aa).

A signal peptide spans Met-1–Ser-19. Residues Cys-20–Arg-181 constitute a propeptide that is removed on maturation. Disulfide bonds link Cys-187–Cys-259 and Cys-266–Cys-284. His-308 is a binding site for Zn(2+). Glu-309 is an active-site residue. Zn(2+) contacts are provided by His-312 and Asp-323.

It belongs to the peptidase M35 family. It depends on Zn(2+) as a cofactor.

It is found in the secreted. It carries out the reaction Preferential cleavage of bonds with hydrophobic residues in P1'. Also 3-Asn-|-Gln-4 and 8-Gly-|-Ser-9 bonds in insulin B chain.. Functionally, secreted metalloproteinase that allows assimilation of proteinaceous substrates. Shows high activities on basic nuclear substrates such as histone and protamine. May be involved in virulence. This is Neutral protease 2 homolog MEP7 (MEP7) from Coccidioides posadasii (strain C735) (Valley fever fungus).